A 98-amino-acid chain; its full sequence is Small ribosomal subunit protein eS24 (98 aa).

Belongs to the eukaryotic ribosomal protein eS24 family. As to quaternary structure, part of the 30S ribosomal subunit.

This chain is Small ribosomal subunit protein eS24, found in Thermococcus kodakarensis (strain ATCC BAA-918 / JCM 12380 / KOD1) (Pyrococcus kodakaraensis (strain KOD1)).